Reading from the N-terminus, the 388-residue chain is 4-hydroxy-3-methylbut-2-en-1-yl diphosphate synthase (flavodoxin) (388 aa).

4 residues coordinate [4Fe-4S] cluster: Cys280, Cys283, Cys315, and Glu322. The interval 369–388 is disordered; it reads MNSEGGPEATSSGSPVVTVS. A compositionally biased stretch (polar residues) spans 377–388; it reads ATSSGSPVVTVS.

Belongs to the IspG family. [4Fe-4S] cluster is required as a cofactor.

It catalyses the reaction (2E)-4-hydroxy-3-methylbut-2-enyl diphosphate + oxidized [flavodoxin] + H2O + 2 H(+) = 2-C-methyl-D-erythritol 2,4-cyclic diphosphate + reduced [flavodoxin]. It functions in the pathway isoprenoid biosynthesis; isopentenyl diphosphate biosynthesis via DXP pathway; isopentenyl diphosphate from 1-deoxy-D-xylulose 5-phosphate: step 5/6. Its function is as follows. Converts 2C-methyl-D-erythritol 2,4-cyclodiphosphate (ME-2,4cPP) into 1-hydroxy-2-methyl-2-(E)-butenyl 4-diphosphate. In Mycolicibacterium paratuberculosis (strain ATCC BAA-968 / K-10) (Mycobacterium paratuberculosis), this protein is 4-hydroxy-3-methylbut-2-en-1-yl diphosphate synthase (flavodoxin).